The chain runs to 259 residues: AA9 family lytic polysaccharide monooxygenase E (259 aa).

The first 20 residues, 1–20 (MKATVLAGLAAVIAAQGVAG), serve as a signal peptide directing secretion. Cu(2+) contacts are provided by histidine 21 and histidine 99. A disulfide bond links cysteine 69 and cysteine 193. O2-binding residues include histidine 179 and glutamine 188. Residue tyrosine 190 participates in Cu(2+) binding.

The protein belongs to the polysaccharide monooxygenase AA9 family. Cu(2+) serves as cofactor.

Its subcellular location is the secreted. The catalysed reaction is [(1-&gt;4)-beta-D-glucosyl]n+m + reduced acceptor + O2 = 4-dehydro-beta-D-glucosyl-[(1-&gt;4)-beta-D-glucosyl]n-1 + [(1-&gt;4)-beta-D-glucosyl]m + acceptor + H2O.. Its function is as follows. Lytic polysaccharide monooxygenase (LPMO) that depolymerizes crystalline and amorphous polysaccharides via the oxidation of scissile alpha- or beta-(1-4)-glycosidic bonds, yielding C1 or C4 oxidation products. Catalysis by LPMOs requires the reduction of the active-site copper from Cu(II) to Cu(I) by a reducing agent and H(2)O(2) or O(2) as a cosubstrate. This is AA9 family lytic polysaccharide monooxygenase E from Malbranchea cinnamomea (Thermophilic fungus).